We begin with the raw amino-acid sequence, 239 residues long: Serine protease SplC (239 aa).

Residues 1-36 (MNKNIVIKSMAALAILTSATGINAAVVEETQQIANA) form the signal peptide. Active-site charge relay system residues include His75, Asp113, and Ser193.

It belongs to the peptidase S1B family.

It localises to the secreted. The sequence is that of Serine protease SplC (splC) from Staphylococcus aureus (strain MSSA476).